Consider the following 291-residue polypeptide: Signal peptidase I (291 aa).

Residues 1–45 (MTMKKLTSTTTTLWDNKLFINNLKNFMQTNTESNNNKTTAQEWKS) lie on the Cytoplasmic side of the membrane. Residues 46 to 66 (FILVVVIALMIRILIIESFVV) form a helical membrane-spanning segment. The Periplasmic segment spans residues 67–291 (PTGSMKATIL…IFRNLYSIED (225 aa)). Residues S70 and K133 contribute to the active site.

The protein belongs to the peptidase S26 family.

The protein resides in the cell inner membrane. It catalyses the reaction Cleavage of hydrophobic, N-terminal signal or leader sequences from secreted and periplasmic proteins.. The sequence is that of Signal peptidase I (lepB) from Rickettsia bellii (strain RML369-C).